Here is a 150-residue protein sequence, read N- to C-terminus: uncharacterized protein (150 aa).

4 helical membrane-spanning segments follow: residues 32 to 52, 64 to 84, 94 to 114, and 123 to 143; these read ILYG…AVSL, FNWL…FISG, IGAL…YLGF, and LIFH…GVNM.

It localises to the cell membrane. This is an uncharacterized protein from Bacillus subtilis (strain 168).